Reading from the N-terminus, the 218-residue chain is Capsid protein (218 aa).

Position 1 is an N-acetylmethionine; by host (M1). Residues M1–G10 show a composition bias toward low complexity. The disordered stretch occupies residues M1–D29. The segment covering R11–S21 has biased composition (basic residues).

The protein belongs to the cucumovirus capsid protein family.

It localises to the virion. Capsid protein. Probably binds RNA and plays a role in packaging. The chain is Capsid protein from Cucumis sativus (Cucumber).